A 299-amino-acid polypeptide reads, in one-letter code: Hydroxymethylglutaryl-CoA lyase YngG (299 aa).

In terms of domain architecture, Pyruvate carboxyltransferase spans 7-274; sequence VTIKEVGPRD…KTNVKLEKLL (268 aa). Substrate is bound at residue arginine 15. A divalent metal cation is bound by residues aspartate 16, histidine 207, and histidine 209. Cysteine 240 is an active-site residue. Asparagine 249 provides a ligand contact to a divalent metal cation.

This sequence belongs to the HMG-CoA lyase family. Homodimer and homotetramer.

It carries out the reaction (3S)-3-hydroxy-3-methylglutaryl-CoA = acetoacetate + acetyl-CoA. Its pathway is metabolic intermediate metabolism; (S)-3-hydroxy-3-methylglutaryl-CoA degradation; acetoacetate from (S)-3-hydroxy-3-methylglutaryl-CoA: step 1/1. In terms of biological role, involved in the catabolism of branched amino acids such as leucine. In Bacillus subtilis (strain 168), this protein is Hydroxymethylglutaryl-CoA lyase YngG (yngG).